The chain runs to 225 residues: DNA repair protein RecO (225 aa).

This sequence belongs to the RecO family.

In terms of biological role, involved in DNA repair and RecF pathway recombination. In Clostridium perfringens (strain ATCC 13124 / DSM 756 / JCM 1290 / NCIMB 6125 / NCTC 8237 / Type A), this protein is DNA repair protein RecO.